A 142-amino-acid polypeptide reads, in one-letter code: Salivary protein 15b (142 aa).

A signal peptide spans 1-20 (MKYLGLALISAVFLIGTCQA). 3 disulfides stabilise this stretch: cysteine 27/cysteine 44, cysteine 40/cysteine 108, and cysteine 91/cysteine 117.

This sequence belongs to the PBP/GOBP family. Female salivary gland.

Its subcellular location is the secreted. Functionally, inhibits contact coagulation pathway activation in the host by sequestering anionic polymers, such as dextran sulfate and heparin, and thus blocking interaction of protein components of the pathway with negatively charged surfaces. Inhibits dextran sulfate-mediated autoactivation of host coagulation factor XII (F12). Inhibits dextran sulfate-mediated activation of host factor XI (F11) by activated F12. Inhibits polyphosphate-induced plasma extravasation at the injection site in mouse model, probably via inhibition of bradykinin generation in host skin. The polypeptide is Salivary protein 15b (Phlebotomus duboscqi (Sandfly)).